The chain runs to 166 residues: 3-isopropylmalate dehydratase small subunit (166 aa).

Belongs to the LeuD family. LeuD type 2 subfamily. Heterodimer of LeuC and LeuD.

The catalysed reaction is (2R,3S)-3-isopropylmalate = (2S)-2-isopropylmalate. Its pathway is amino-acid biosynthesis; L-leucine biosynthesis; L-leucine from 3-methyl-2-oxobutanoate: step 2/4. Functionally, catalyzes the isomerization between 2-isopropylmalate and 3-isopropylmalate, via the formation of 2-isopropylmaleate. The sequence is that of 3-isopropylmalate dehydratase small subunit from Aliarcobacter butzleri (strain RM4018) (Arcobacter butzleri).